Consider the following 312-residue polypeptide: MNWTELSIVVNHEVEPLVTDILENYGSNGVVIEDSNDLINQPADKFGEIYELKQEDYPEKGVRLKAYFNELKFDDSLRNKIKTAVTNLENIDSTVLNFSEQTIAEVDWENEWKNYFHPFRASEKFTIVPSWEQYTKEDDSEMCIELDPGMAFGTGDHPTTSMCLKAIETYVDSDNSVIDVGTGSGILSIASHLLGVKRIKALDIDELAVNVAKENFAKNHCEDAIEAVPGNLLKNETEKFDIVIANILAHIIEDMIEDAYNTLNKDGYFITSGIIEEKHKQILNKMQNVGFDIKSVNHDNGWVCIVGQKVSE.

Positions 160, 181, 203, and 246 each coordinate S-adenosyl-L-methionine.

It belongs to the methyltransferase superfamily. PrmA family.

The protein localises to the cytoplasm. It catalyses the reaction L-lysyl-[protein] + 3 S-adenosyl-L-methionine = N(6),N(6),N(6)-trimethyl-L-lysyl-[protein] + 3 S-adenosyl-L-homocysteine + 3 H(+). Methylates ribosomal protein L11. This is Ribosomal protein L11 methyltransferase from Staphylococcus haemolyticus (strain JCSC1435).